The following is a 398-amino-acid chain: Lysophosphatidylserine lipase ABHD12 (398 aa).

A compositionally biased stretch (basic and acidic residues) spans 1–15; the sequence is MRKRTEPVTLEHERC. The tract at residues 1–24 is disordered; the sequence is MRKRTEPVTLEHERCAASGSSSSG. At 1–74 the chain is on the cytoplasmic side; that stretch reads MRKRTEPVTL…RKSLWFRLRK (74 aa). A helical transmembrane segment spans residues 75 to 95; sequence ILLCVLGFYIAIPFLVKLCPG. Residues 96 to 398 lie on the Extracellular side of the membrane; the sequence is IQAKLIFLNF…LGKSEPERQH (303 aa). N123 carries N-linked (GlcNAc...) asparagine glycosylation. S246 (nucleophile) is an active-site residue. Catalysis depends on charge relay system residues D333 and H372.

The protein belongs to the serine esterase family.

The protein resides in the endoplasmic reticulum membrane. The enzyme catalyses 1-(9Z-octadecenoyl)-sn-glycero-3-phospho-L-serine + H2O = sn-glycero-3-phospho-L-serine + (9Z)-octadecenoate + H(+). The catalysed reaction is 1-(9Z-octadecenoyl)-sn-glycero-3-phospho-(1'-sn-glycerol) + H2O = sn-glycero-3-phospho-(1'-sn-glycerol) + (9Z)-octadecenoate + H(+). It carries out the reaction 1-(9Z-octadecenoyl)-sn-glycero-3-phospho-(1D-myo-inositol) + H2O = sn-glycero-3-phospho-1D-myo-inositol + (9Z)-octadecenoate + H(+). It catalyses the reaction 1-(9Z-octadecenoyl)-sn-glycero-3-phosphoethanolamine + H2O = sn-glycero-3-phosphoethanolamine + (9Z)-octadecenoate + H(+). The enzyme catalyses 1-(9Z-octadecenoyl)-sn-glycero-3-phosphocholine + H2O = 1-(9Z-octadecenoyl)-sn-glycerol + phosphocholine + H(+). The catalysed reaction is 2-(9Z-octadecenoyl)-glycerol + H2O = glycerol + (9Z)-octadecenoate + H(+). It carries out the reaction 1-hexadecanoyl-sn-glycero-3-phospho-L-serine + H2O = sn-glycero-3-phospho-L-serine + hexadecanoate + H(+). It catalyses the reaction 2-(5Z,8Z,11Z,14Z-eicosatetraenoyl)-glycerol + H2O = glycerol + (5Z,8Z,11Z,14Z)-eicosatetraenoate + H(+). The enzyme catalyses Hydrolyzes glycerol monoesters of long-chain fatty acids.. The catalysed reaction is 1-decanoylglycerol + H2O = decanoate + glycerol + H(+). It carries out the reaction 1-dodecanoylglycerol + H2O = dodecanoate + glycerol + H(+). It catalyses the reaction 1-tetradecanoylglycerol + H2O = tetradecanoate + glycerol + H(+). The enzyme catalyses 2-hexadecanoylglycerol + H2O = glycerol + hexadecanoate + H(+). The catalysed reaction is 1-(9Z-octadecenoyl)-glycerol + H2O = glycerol + (9Z)-octadecenoate + H(+). It carries out the reaction 2-(9Z,12Z-octadecadienoyl)-glycerol + H2O = (9Z,12Z)-octadecadienoate + glycerol + H(+). It catalyses the reaction 1-(5Z,8Z,11Z,14Z-eicosatetraenoyl)-glycerol + H2O = glycerol + (5Z,8Z,11Z,14Z)-eicosatetraenoate + H(+). The enzyme catalyses 1-(9Z,12Z-octadecadienoyl)-glycerol + H2O = (9Z,12Z)-octadecadienoate + glycerol + H(+). The catalysed reaction is 1-hexadecanoylglycerol + H2O = glycerol + hexadecanoate + H(+). It carries out the reaction 1-octadecanoylglycerol + H2O = octadecanoate + glycerol + H(+). It catalyses the reaction 1-octadecanoyl-2-(9,10-epoxyoctadecanoyl)-sn-glycero-3-phospho-L-serine + H2O = 9,10-epoxyoctadecanoate + 1-octadecanoyl-sn-glycero-3-phosphoserine + H(+). The enzyme catalyses 1-octadecanoyl-2-(10-hydroxyoctadecanoyl)-sn-glycero-3-phospho-L-serine + H2O = 1-octadecanoyl-sn-glycero-3-phosphoserine + 10-hydroxyoctadecanoate + H(+). The catalysed reaction is 1-hexadecanoyl-2-(10-hydroxyoctadecanoyl)-sn-glycero-3-phospho-L-serine + H2O = 10-hydroxyoctadecanoate + 1-hexadecanoyl-sn-glycero-3-phospho-L-serine + H(+). Functionally, lysophosphatidylserine (LPS) lipase that mediates the hydrolysis of lysophosphatidylserine, a class of signaling lipids that regulates immunological and neurological processes. Represents a major lysophosphatidylserine lipase in the brain, thereby playing a key role in the central nervous system. Also able to hydrolyze oxidized phosphatidylserine; oxidized phosphatidylserine is produced in response to severe inflammatory stress and constitutes a proapoptotic 'eat me' signal. Also has monoacylglycerol (MAG) lipase activity: hydrolyzes 2-arachidonoylglycerol (2-AG), thereby acting as a regulator of endocannabinoid signaling pathways. Has a strong preference for very-long-chain lipid substrates; substrate specificity is likely due to improved catalysis and not improved substrate binding. This is Lysophosphatidylserine lipase ABHD12 from Rattus norvegicus (Rat).